Here is a 352-residue protein sequence, read N- to C-terminus: Divinyl chlorophyll a/b light-harvesting protein PcbH (352 aa).

A run of 6 helical transmembrane segments spans residues 27–47 (FIGS…ASCL), 88–108 (VATI…AGLA), 140–160 (FILG…VEWA), 202–222 (VMSG…FHIA), 242–262 (AVLS…AFWA), and 309–329 (LVNV…WHAL).

It belongs to the PsbB/PsbC family. IsiA/Pcb subfamily. In terms of assembly, the antenna complex consists of divinyl chlorophylls (a and b) and divinyl chlorophyll a/b binding proteins and binds more divinyl chlorophyll b than does the antenna complex from high-light-adapted Prochlorococcus. Divinyl chlorophyll a serves as cofactor. Divinyl chlorophyll b is required as a cofactor.

It is found in the cellular thylakoid membrane. Its function is as follows. The antenna complex functions as a light receptor, it captures and delivers excitation energy to photosystems II and I. The Prochlorales pcb genes are not related to higher plant LHCs. This Prochlorococcus marinus (strain SARG / CCMP1375 / SS120) protein is Divinyl chlorophyll a/b light-harvesting protein PcbH (pcbH).